A 150-amino-acid polypeptide reads, in one-letter code: Transthyretin (150 aa).

The N-terminal stretch at 1–20 (MAFHSTLLVFLAGLVFLSEA) is a signal peptide. Cys33 bears the Sulfocysteine mark. 3 residues coordinate L-thyroxine: Lys38, Glu77, and Ser140.

It belongs to the transthyretin family. As to quaternary structure, homotetramer. Dimer of dimers. In the homotetramer, subunits assemble around a central channel that can accommodate two ligand molecules. In terms of processing, sulfonation of the reactive cysteine Cys-33 enhances the stability of the native conformation of TTR, avoiding misassembly of the protein leading to amyloid formation. Detected in serum (at protein level). Detected in liver and choroid plexus.

The protein resides in the secreted. Its function is as follows. Thyroid hormone-binding protein. Probably transports thyroxine from the bloodstream to the brain. This chain is Transthyretin (TTR), found in Gallus gallus (Chicken).